The chain runs to 435 residues: T-box transcription factor T (435 aa).

A DNA-binding region (T-box) is located at residues 51–219; that stretch reads LWLRFKELTN…YNPFAKAFLD (169 aa). The tract at residues 279-308 is disordered; that stretch reads YPTLRSHRSSPYPSPYAHRNNSPTYSDNSP. Residues 297 to 308 show a composition bias toward polar residues; it reads RNNSPTYSDNSP.

In terms of assembly, monomer. In terms of tissue distribution, detected in testis, but not in other, normal tissues. Detected in lung tumors (at protein level).

The protein resides in the nucleus. Involved in the transcriptional regulation of genes required for mesoderm formation and differentiation. Binds to a palindromic T site 5'-TTCACACCTAGGTGTGAA-3' DNA sequence and activates gene transcription when bound to such a site. This is T-box transcription factor T from Homo sapiens (Human).